A 364-amino-acid polypeptide reads, in one-letter code: Phosrestin-2 (364 aa).

It belongs to the arrestin family. Post-translationally, phosphorylated, but does not undergo light-induced phosphorylation. As to expression, expressed specifically and abundantly in photoreceptor cells in retina and ocelli.

The protein localises to the cell projection. It is found in the rhabdomere. In terms of biological role, regulates photoreceptor cell deactivation. Arr1 and Arr2 proteins are mediators of rhodopsin inactivation and are essential for the termination of the phototransduction cascade. Involved in regulating normal cycles of per nuclear accumulation in brain circadian neurons and thus is important for normal circadian behavior. In the dark, functions with Arr2 to promote the formation of cytosolic Bdbt foci, which are required for dco localization to photoreceptor nuclei where it phosphorylates and activates degradation of per. This Drosophila melanogaster (Fruit fly) protein is Phosrestin-2 (Arr1).